Here is a 656-residue protein sequence, read N- to C-terminus: tRNA(Met) cytidine acetyltransferase TmcA (656 aa).

Residues Gln145, 167–176 (GRGKSALLGM), and Arg291 each bind ATP. The N-acetyltransferase domain occupies 368–542 (SEGKYNRQFF…SGCYSAIALK (175 aa)). Acetyl-CoA is bound by residues 474–476 (IAV), 481–487 (QQKGIGQ), and Glu510.

This sequence belongs to the RNA cytidine acetyltransferase family. TmcA subfamily.

The protein localises to the cytoplasm. It carries out the reaction cytidine(34) in elongator tRNA(Met) + acetyl-CoA + ATP + H2O = N(4)-acetylcytidine(34) in elongator tRNA(Met) + ADP + phosphate + CoA + H(+). In terms of biological role, catalyzes the formation of N(4)-acetylcytidine (ac(4)C) at the wobble position of tRNA(Met), by using acetyl-CoA as an acetyl donor and ATP (or GTP). This chain is tRNA(Met) cytidine acetyltransferase TmcA, found in Haemophilus influenzae (strain ATCC 51907 / DSM 11121 / KW20 / Rd).